We begin with the raw amino-acid sequence, 206 residues long: Small ribosomal subunit protein uS4 (206 aa).

Residues 96–158 (GRLDNVVYRM…AKQQSRIKAA (63 aa)) enclose the S4 RNA-binding domain.

The protein belongs to the universal ribosomal protein uS4 family. As to quaternary structure, part of the 30S ribosomal subunit. Contacts protein S5. The interaction surface between S4 and S5 is involved in control of translational fidelity.

Functionally, one of the primary rRNA binding proteins, it binds directly to 16S rRNA where it nucleates assembly of the body of the 30S subunit. Its function is as follows. With S5 and S12 plays an important role in translational accuracy. The chain is Small ribosomal subunit protein uS4 from Vibrio atlanticus (strain LGP32) (Vibrio splendidus (strain Mel32)).